A 461-amino-acid polypeptide reads, in one-letter code: Bifunctional enzyme LpxC/FabZ (461 aa).

The UDP-3-O-acyl-N-acetylglucosamine deacetylase stretch occupies residues 1 to 302 (MLKQKTLKDS…FARQMRKEIR (302 aa)). Residues His-78, His-260, and Asp-264 each coordinate Zn(2+). His-287 (proton donor) is an active-site residue. The 3-hydroxyacyl-[acyl-carrier-protein] dehydratase stretch occupies residues 303–461 (LHEIQAPTYD…EFMAQIVKNK (159 aa)). His-364 is an active-site residue.

It in the N-terminal section; belongs to the LpxC family. The protein in the C-terminal section; belongs to the thioester dehydratase family. The cofactor is Zn(2+).

Its subcellular location is the cytoplasm. It carries out the reaction a UDP-3-O-[(3R)-3-hydroxyacyl]-N-acetyl-alpha-D-glucosamine + H2O = a UDP-3-O-[(3R)-3-hydroxyacyl]-alpha-D-glucosamine + acetate. The enzyme catalyses a (3R)-hydroxyacyl-[ACP] = a (2E)-enoyl-[ACP] + H2O. It functions in the pathway glycolipid biosynthesis; lipid IV(A) biosynthesis; lipid IV(A) from (3R)-3-hydroxytetradecanoyl-[acyl-carrier-protein] and UDP-N-acetyl-alpha-D-glucosamine: step 2/6. Functionally, catalyzes the hydrolysis of UDP-3-O-myristoyl-N-acetylglucosamine to form UDP-3-O-myristoylglucosamine and acetate, the committed step in lipid A biosynthesis. In terms of biological role, involved in unsaturated fatty acids biosynthesis. Catalyzes the dehydration of short chain beta-hydroxyacyl-ACPs and long chain saturated and unsaturated beta-hydroxyacyl-ACPs. In Bacteroides thetaiotaomicron (strain ATCC 29148 / DSM 2079 / JCM 5827 / CCUG 10774 / NCTC 10582 / VPI-5482 / E50), this protein is Bifunctional enzyme LpxC/FabZ (lpxC/fabZ).